Reading from the N-terminus, the 273-residue chain is 4-hydroxy-tetrahydrodipicolinate reductase (273 aa).

NAD(+)-binding positions include 12-17 (GAGGRM) and Glu-38. Arg-39 is a binding site for NADP(+). Residues 102–104 (GTT) and 126–129 (AANF) each bind NAD(+). His-159 serves as the catalytic Proton donor/acceptor. Residue His-160 coordinates (S)-2,3,4,5-tetrahydrodipicolinate. The active-site Proton donor is Lys-163. 169 to 170 (GT) contributes to the (S)-2,3,4,5-tetrahydrodipicolinate binding site.

This sequence belongs to the DapB family. In terms of assembly, homotetramer.

Its subcellular location is the cytoplasm. The catalysed reaction is (S)-2,3,4,5-tetrahydrodipicolinate + NAD(+) + H2O = (2S,4S)-4-hydroxy-2,3,4,5-tetrahydrodipicolinate + NADH + H(+). It catalyses the reaction (S)-2,3,4,5-tetrahydrodipicolinate + NADP(+) + H2O = (2S,4S)-4-hydroxy-2,3,4,5-tetrahydrodipicolinate + NADPH + H(+). Its pathway is amino-acid biosynthesis; L-lysine biosynthesis via DAP pathway; (S)-tetrahydrodipicolinate from L-aspartate: step 4/4. Catalyzes the conversion of 4-hydroxy-tetrahydrodipicolinate (HTPA) to tetrahydrodipicolinate. This Pectobacterium atrosepticum (strain SCRI 1043 / ATCC BAA-672) (Erwinia carotovora subsp. atroseptica) protein is 4-hydroxy-tetrahydrodipicolinate reductase.